The sequence spans 145 residues: Ponticulin-like protein B (145 aa).

Residues 1-22 form the signal peptide; that stretch reads MLFIKSLLLLLSLIFAVSNATG. N-linked (GlcNAc...) asparagine glycosylation is present at N34. A disordered region spans residues 107–126; that stretch reads DTTSSSTSPSSTSPSSTSPA. Residues 108 to 126 show a composition bias toward low complexity; sequence TTSSSTSPSSTSPSSTSPA. S117 carries the GPI-like-anchor amidated serine lipid modification. A propeptide spans 118-145 (removed in mature form); the sequence is TSPSSTSPASTLIGSIAFVTLAALFALI.

Belongs to the ponticulin family. Post-translationally, the GPI-like-anchor contains a phosphoceramide group, rather than a phosphatidyl group.

The protein localises to the cell membrane. Its function is as follows. Binds F-actin and nucleates actin assembly. In Dictyostelium discoideum (Social amoeba), this protein is Ponticulin-like protein B (ponB).